A 124-amino-acid chain; its full sequence is UPF0738 protein ABC2521 (124 aa).

Belongs to the UPF0738 family.

This is UPF0738 protein ABC2521 from Shouchella clausii (strain KSM-K16) (Alkalihalobacillus clausii).